A 457-amino-acid chain; its full sequence is Multidrug resistance protein MdtK (457 aa).

The next 12 membrane-spanning stretches (helical) occupy residues 11 to 31 (LLAL…MGFV), 53 to 73 (IWLP…PVIA), 93 to 113 (WLVA…GHII), 127 to 147 (AIGY…FQVL), 160 to 180 (GMVI…IFIY), 188 to 208 (LGGV…YLLM), 239 to 259 (IAIG…FAVV), 277 to 297 (ALNF…AATI), 316 to 336 (RTAI…TIVL), 357 to 377 (LMLL…GSGV), 387 to 407 (IFFI…YLLA), and 418 to 438 (PSGF…MMAL).

It belongs to the multi antimicrobial extrusion (MATE) (TC 2.A.66.1) family. MdtK subfamily.

Its subcellular location is the cell inner membrane. Multidrug efflux pump that functions probably as a Na(+)/drug antiporter. This chain is Multidrug resistance protein MdtK, found in Edwardsiella ictaluri (strain 93-146).